The chain runs to 79 residues: Biotin synthase auxiliary protein (79 aa).

The protein belongs to the BsaP family. Iron-sulfur cluster is required as a cofactor.

In terms of biological role, required for the activity of the biotin synthase BioB. The polypeptide is Biotin synthase auxiliary protein (Mycobacterium bovis (strain ATCC BAA-935 / AF2122/97)).